Consider the following 206-residue polypeptide: Two-component response regulator ORR7 (206 aa).

The segment at Val-53–Tyr-92 is disordered. Residues Ser-61–Ala-88 are compositionally biased toward acidic residues. The Response regulatory domain maps to Tyr-92–Leu-205. Asp-138 carries the 4-aspartylphosphate modification.

This sequence belongs to the ARR family. Type-A subfamily. In terms of processing, two-component system major event consists of a His-to-Asp phosphorelay between a sensor histidine kinase (HK) and a response regulator (RR). In plants, the His-to-Asp phosphorelay involves an additional intermediate named Histidine-containing phosphotransfer protein (HPt). This multistep phosphorelay consists of a His-Asp-His-Asp sequential transfer of a phosphate group between first a His and an Asp of the HK protein, followed by the transfer to a conserved His of the HPt protein and finally the transfer to an Asp in the receiver domain of the RR protein. Expressed in flowers, and at low levels in roots, mature leaves and shoots.

Functionally, functions as a response regulator involved in His-to-Asp phosphorelay signal transduction system. Phosphorylation of the Asp residue in the receiver domain activates the ability of the protein to promote the transcription of target genes. Type-A response regulators seem to act as negative regulators of the cytokinin signaling. The polypeptide is Two-component response regulator ORR7 (Oryza sativa subsp. indica (Rice)).